The following is a 467-amino-acid chain: GTPase Der (467 aa).

EngA-type G domains lie at 3–167 (PTLV…PYEE) and 179–352 (PVIA…AAAR). Residues 9–16 (GRPNVGKS), 56–60 (DTGGF), 119–122 (NKTE), 185–192 (GRPNVGKS), 232–236 (DTAGL), and 297–300 (NKWD) contribute to the GTP site. One can recognise a KH-like domain in the interval 353–437 (AHIPTPKLTR…PLRVEFRTGH (85 aa)). A disordered region spans residues 434 to 467 (RTGHNPYAGKKTPLTEEEARRAHSRRRRNRKKYG). Positions 455–467 (AHSRRRRNRKKYG) are enriched in basic residues.

Belongs to the TRAFAC class TrmE-Era-EngA-EngB-Septin-like GTPase superfamily. EngA (Der) GTPase family. As to quaternary structure, associates with the 50S ribosomal subunit.

Functionally, GTPase that plays an essential role in the late steps of ribosome biogenesis. The sequence is that of GTPase Der from Nitrosomonas europaea (strain ATCC 19718 / CIP 103999 / KCTC 2705 / NBRC 14298).